A 509-amino-acid chain; its full sequence is MDEYEAQLVAVEQALENTTDEQQREELSTLRTNLQELLALTRETEADQTAEQGDILDDELLRLKSELNELEEAAANVGATKNKDEEQQLKDLRAKYNALVGEKCSAPHEHSWGALSYHNALICGVDDEVIINRNSELDVRLRVLYINPTHCEMLPCNYYLEGECRFDEIRCRYSHGALVPGASIKSYIPPDFPRLARNCPVLAKMPDRLWHRGRVLCANFVEQTCRVRLDGQDHKERERDFQFEELFPLITEEEDGLTSEDSSSSPHDESSDEIDSDMDDLEAAHRSRMVELSLFTFKPTEKLGAWEQYTRGIGSKLMEKMGYIHGTGLGSEGRGIVTPVSAQILPQGRSLDACMELREAANGDQDYFSVERKLKRAQRRQNKANEKAYARETQRTDVFSFLNGSVLGGGESRHQGDQAAKKAKTNDLQQHSTKTLNVETVRVADDIRRKQRDIAKVKQSLDRNATDIQLQKRLHMQLQSQKQELATLQAHEHRLSKEQHTRKNKMFEF.

A C3H1-type zinc finger spans residues proline 155–leucine 178. The segment at glutamate 253–aspartate 277 is disordered. In terms of domain architecture, G-patch spans threonine 310–glutamate 356. The segment at glycine 409 to glutamine 430 is disordered. Basic and acidic residues predominate over residues glutamate 411–alanine 420.

Its subcellular location is the nucleus. Transcription repressor. In Drosophila persimilis (Fruit fly), this protein is Zinc finger CCCH-type with G patch domain-containing protein.